Consider the following 667-residue polypeptide: Polypeptide N-acetylgalactosaminyltransferase 3 (667 aa).

Residues 1 to 12 (MGLRFQQLKKLW) are Cytoplasmic-facing. The helical; Signal-anchor for type II membrane protein transmembrane segment at 13–35 (LLYLFLLFFAFFMFAISINLYVA) threads the bilayer. At 36-667 (SIQGGDAEMR…WGFIPLPWRM (632 aa)) the chain is on the lumenal side. N-linked (GlcNAc...) asparagine glycosylation is found at asparagine 75 and asparagine 129. 5 disulfides stabilise this stretch: cysteine 140–cysteine 375, cysteine 366–cysteine 446, cysteine 526–cysteine 547, cysteine 572–cysteine 601, and cysteine 626–cysteine 649. The catalytic subdomain A stretch occupies residues 149–259 (LPSTSVIIVF…RGWLEPLLSR (111 aa)). The substrate site is built by aspartate 190 and arginine 220. The Mn(2+) site is built by aspartate 243 and histidine 245. 2 N-linked (GlcNAc...) asparagine glycosylation sites follow: asparagine 279 and asparagine 313. Residues 321–383 (PIATPGMAGG…PCSHVGHVFR (63 aa)) are catalytic subdomain B. A substrate-binding site is contributed by tryptophan 352. Histidine 380 is a binding site for Mn(2+). Residues arginine 383 and tyrosine 388 each contribute to the substrate site. N-linked (GlcNAc...) asparagine glycosylation is present at asparagine 433. In terms of domain architecture, Ricin B-type lectin spans 513 to 661 (EELMALIDLE…KDITQKWGFI (149 aa)). Asparagine 590 carries N-linked (GlcNAc...) asparagine glycosylation.

Belongs to the glycosyltransferase 2 family. GalNAc-T subfamily. It depends on Mn(2+) as a cofactor. In terms of tissue distribution, expressed in developing oocytes and egg chambers. During embryonic stages 9-11, expressed in the primordiums of the foregut, midgut and hindgut. During embryonic stages 12-13, expression is found uniquely in the posterior spiracle. During embryonic stages 14-17, expressed in the pharynx, esophagus and posterior spiracles. Expression observed in the epidermis during embryonic stages 16-17. In third instar larvae, expressed ubiquitously in wing, with increased expression in pleura and notum, eye-antennal, leg and haltere imaginal disks.

It localises to the golgi apparatus membrane. The catalysed reaction is L-seryl-[protein] + UDP-N-acetyl-alpha-D-galactosamine = a 3-O-[N-acetyl-alpha-D-galactosaminyl]-L-seryl-[protein] + UDP + H(+). It carries out the reaction L-threonyl-[protein] + UDP-N-acetyl-alpha-D-galactosamine = a 3-O-[N-acetyl-alpha-D-galactosaminyl]-L-threonyl-[protein] + UDP + H(+). Its pathway is protein modification; protein glycosylation. Its function is as follows. Catalyzes the initial reaction in O-linked oligosaccharide biosynthesis, the transfer of an N-acetyl-D-galactosamine residue to a serine or threonine residue on the protein receptor. It can both act as a peptide transferase that transfers GalNAc onto unmodified peptide substrates, and as a glycopeptide transferase that requires the prior addition of a GalNAc on a peptide before adding additional GalNAc moieties. Prefers EA2 as substrate. Has weak activity toward Muc5AC-3, -13 and -3/13 substrates. Plays a critical role in the regulation of integrin-mediated cell adhesion during wing development by influencing, via glycosylation, the secretion and localization of the integrin ligand Tig to the basal cell layer interface. Might have a role in protein O-glycosylation in the Golgi and thereby in establishing and/or maintaining a proper secretory apparatus structure. Together with Pgant35A, regulates integrin levels and activity-dependent integrin signaling at the synapse in neurons and muscles. This is Polypeptide N-acetylgalactosaminyltransferase 3 from Drosophila melanogaster (Fruit fly).